The primary structure comprises 501 residues: Betaine aldehyde dehydrogenase, chloroplastic (501 aa).

The transit peptide at 1 to 7 (MAIRVPS) directs the protein to the chloroplast. 238–243 (GSTATG) lines the NAD(+) pocket. The Proton acceptor role is filled by Glu260. Catalysis depends on Cys294, which acts as the Nucleophile.

The protein belongs to the aldehyde dehydrogenase family. In terms of assembly, homodimer.

The protein resides in the plastid. The protein localises to the chloroplast. The catalysed reaction is betaine aldehyde + NAD(+) + H2O = glycine betaine + NADH + 2 H(+). The protein operates within amine and polyamine biosynthesis; betaine biosynthesis via choline pathway; betaine from betaine aldehyde: step 1/1. The protein is Betaine aldehyde dehydrogenase, chloroplastic (BADH4) of Amaranthus hypochondriacus (Prince-of-Wales feather).